We begin with the raw amino-acid sequence, 251 residues long: Probable transcriptional regulatory protein MRA_2631 (251 aa).

The protein belongs to the TACO1 family.

The protein localises to the cytoplasm. This Mycobacterium tuberculosis (strain ATCC 25177 / H37Ra) protein is Probable transcriptional regulatory protein MRA_2631.